We begin with the raw amino-acid sequence, 224 residues long: Putative MgpC-like protein MPN_150 (224 aa).

This sequence belongs to the MgpC family.

In Mycoplasma pneumoniae (strain ATCC 29342 / M129 / Subtype 1) (Mycoplasmoides pneumoniae), this protein is Putative MgpC-like protein MPN_150.